The following is a 200-amino-acid chain: Mediator of RNA polymerase II transcription subunit 22 (200 aa).

Residues 93–123 (SVNDAISLQNQQLRSLQEECDKKLISLRDEI) are a coiled coil. The interval 159–200 (ASPSSSSSSTQGDQEEVEILPSQETEPQHHLNGQGTSSLEKM) is disordered. The segment covering 189 to 200 (LNGQGTSSLEKM) has biased composition (polar residues).

It belongs to the Mediator complex subunit 22 family. As to quaternary structure, component of the Mediator complex.

The protein localises to the nucleus. Its function is as follows. Component of the Mediator complex, a coactivator involved in the regulated transcription of nearly all RNA polymerase II-dependent genes. Mediator functions as a bridge to convey information from gene-specific regulatory proteins to the basal RNA polymerase II transcription machinery. Mediator is recruited to promoters by direct interactions with regulatory proteins and serves as a scaffold for the assembly of a functional preinitiation complex with RNA polymerase II and the general transcription factors. This chain is Mediator of RNA polymerase II transcription subunit 22 (med22), found in Takifugu rubripes (Japanese pufferfish).